The following is a 607-amino-acid chain: All-trans-retinol 13,14-reductase (607 aa).

The first 22 residues, 1 to 22 (MWFAVVAIFLALVAFLYRYVVG), serve as a signal peptide directing secretion.

It belongs to the carotenoid/retinoid oxidoreductase family. CrtISO subfamily. NAD(+) serves as cofactor. Requires NADP(+) as cofactor. The cofactor is FAD.

It is found in the endoplasmic reticulum membrane. It catalyses the reaction all-trans-13,14-dihydroretinol + A = all-trans-retinol + AH2. Catalyzes the saturation of all-trans-retinol to all-trans-13,14-dihydroretinol. In addition, saturates the 7-8 double bond of all-trans-retinol to produce all-trans-7,8-dihydroretinol. Can also use vitamin A2 (all-trans-3,4-didehydroretinol) as a substrate, to produce all-trans-13,14-dihydro-3,4-didehydroretinol or all-trans-7,8-dihydro-3,4-didehydroretinol. May play a role in vitamin A metabolism. This chain is All-trans-retinol 13,14-reductase, found in Danio rerio (Zebrafish).